Consider the following 1058-residue polypeptide: Lon protease homolog, mitochondrial (1058 aa).

A mitochondrion-targeting transit peptide spans 1–47; it reads MLTRIRNAGVGGNAARRVRLLAGYTGARMAHAAALNSTTGAGGAARA. The interval 72 to 151 is disordered; it reads GGQCILKQDR…RSNPPSEGEV (80 aa). Composition is skewed to basic and acidic residues over residues 78-97 and 106-118; these read KQDREPDQSDDKKVPPRAEE and DEEAERQPREEQA. Over residues 129–142 the composition is skewed to gly residues; it reads GSGGSASSAGGGGR. The 255-residue stretch at 158 to 412 folds into the Lon N-terminal domain; sequence LMVLPMSNRP…KALVFIKKEV (255 aa). 564-571 lines the ATP pocket; the sequence is GPPGVGKT. Residues 778-814 form a disordered region; the sequence is TPKSAPAETNIEPENGKPDASAKPLTNNLPAPEPLNI. Residues 844-1030 form the Lon proteolytic domain; the sequence is KTPAGVVMGL…DDVFNVLFGS (187 aa). Catalysis depends on residues serine 936 and lysine 979.

The protein belongs to the peptidase S16 family. As to quaternary structure, homohexamer or homoheptamer. Organized in a ring with a central cavity.

Its subcellular location is the mitochondrion matrix. It catalyses the reaction Hydrolysis of proteins in presence of ATP.. Functionally, ATP-dependent serine protease that mediates the selective degradation of misfolded, unassembled or oxidatively damaged polypeptides as well as certain short-lived regulatory proteins in the mitochondrial matrix. May also have a chaperone function in the assembly of inner membrane protein complexes. Participates in the regulation of mitochondrial gene expression and in the maintenance of the integrity of the mitochondrial genome. Binds to mitochondrial DNA in a site-specific manner. This Eremothecium gossypii (strain ATCC 10895 / CBS 109.51 / FGSC 9923 / NRRL Y-1056) (Yeast) protein is Lon protease homolog, mitochondrial.